The primary structure comprises 89 residues: MAAMKSLATAILVVLLLRRLPRGLSQNCSAAIGELMTCGPYVLPGSNGAPSEQCCSALKAVNHGCLCETINIISSLPDHCSLPAVNCAA.

An N-terminal signal peptide occupies residues 1 to 25; sequence MAAMKSLATAILVVLLLRRLPRGLS. Intrachain disulfides connect Cys28–Cys65, Cys38–Cys54, Cys55–Cys80, and Cys67–Cys87.

The protein belongs to the A9/FIL1 family. As to expression, tapetum of anthers.

The protein localises to the secreted. This Lilium henryi (Henry's lily) protein is Protein M7 (M7).